A 450-amino-acid polypeptide reads, in one-letter code: LanC-like protein 2 (450 aa).

Gly2 carries N-myristoyl glycine lipidation. An interaction with inositol phospholipids region spans residues 2–14 (GETMSKRLKFHLG). Tyr198 bears the Phosphotyrosine mark.

This sequence belongs to the LanC-like protein family. In terms of assembly, interacts with an array of inositol phospholipids such as phosphatidylinositol 3-phosphate (PI3P), phosphatidylinositol 4-phosphate (PI4P) and phosphatidylinositol 5-phosphate (PI5P). PIP-binding enhances membrane association. In terms of processing, myristoylated. Essential for membrane association.

Its subcellular location is the nucleus. The protein resides in the cytoplasm. The protein localises to the cell membrane. Its function is as follows. Necessary for abscisic acid (ABA) binding on the cell membrane and activation of the ABA signaling pathway in granulocytes. The protein is LanC-like protein 2 (Lancl2) of Mus musculus (Mouse).